We begin with the raw amino-acid sequence, 460 residues long: Bifunctional protein GlmU (460 aa).

The interval 1-235 is pyrophosphorylase; sequence MTLTAAIVLA…PLSVEGVNDR (235 aa). UDP-N-acetyl-alpha-D-glucosamine contacts are provided by residues 9 to 12, Lys-23, Gln-76, and 81 to 82; these read LAAG and GT. Asp-109 lines the Mg(2+) pocket. UDP-N-acetyl-alpha-D-glucosamine contacts are provided by Gly-146, Glu-161, Asn-176, and Asn-233. Asn-233 lines the Mg(2+) pocket. The tract at residues 236–256 is linker; it reads VQLASLAKAHNLRVCRQWMLD. Residues 257–460 form an N-acetyltransferase region; that stretch reads GVTIVDPQTT…VDNWKPAWER (204 aa). Positions 338 and 356 each coordinate UDP-N-acetyl-alpha-D-glucosamine. His-368 acts as the Proton acceptor in catalysis. Residues Tyr-371 and Asn-382 each contribute to the UDP-N-acetyl-alpha-D-glucosamine site. Acetyl-CoA contacts are provided by residues 391 to 392 and Ala-428; that span reads NY.

The protein in the N-terminal section; belongs to the N-acetylglucosamine-1-phosphate uridyltransferase family. This sequence in the C-terminal section; belongs to the transferase hexapeptide repeat family. Homotrimer. Mg(2+) is required as a cofactor.

Its subcellular location is the cytoplasm. The enzyme catalyses alpha-D-glucosamine 1-phosphate + acetyl-CoA = N-acetyl-alpha-D-glucosamine 1-phosphate + CoA + H(+). It catalyses the reaction N-acetyl-alpha-D-glucosamine 1-phosphate + UTP + H(+) = UDP-N-acetyl-alpha-D-glucosamine + diphosphate. It participates in nucleotide-sugar biosynthesis; UDP-N-acetyl-alpha-D-glucosamine biosynthesis; N-acetyl-alpha-D-glucosamine 1-phosphate from alpha-D-glucosamine 6-phosphate (route II): step 2/2. It functions in the pathway nucleotide-sugar biosynthesis; UDP-N-acetyl-alpha-D-glucosamine biosynthesis; UDP-N-acetyl-alpha-D-glucosamine from N-acetyl-alpha-D-glucosamine 1-phosphate: step 1/1. The protein operates within bacterial outer membrane biogenesis; LPS lipid A biosynthesis. Functionally, catalyzes the last two sequential reactions in the de novo biosynthetic pathway for UDP-N-acetylglucosamine (UDP-GlcNAc). The C-terminal domain catalyzes the transfer of acetyl group from acetyl coenzyme A to glucosamine-1-phosphate (GlcN-1-P) to produce N-acetylglucosamine-1-phosphate (GlcNAc-1-P), which is converted into UDP-GlcNAc by the transfer of uridine 5-monophosphate (from uridine 5-triphosphate), a reaction catalyzed by the N-terminal domain. This Bifidobacterium animalis subsp. lactis (strain AD011) protein is Bifunctional protein GlmU.